The following is a 260-amino-acid chain: MEGGTAHYSPRTVEEVFRDFKGRRAGIIQALTTDVEDFFQQCDPEKQNLCLYGFPNEVWEVNLPAEEVPPELPEPALGINFARDGMQERNWLSLVAVHSDAWLLSVSFYFGSRFGFDRADRKRLFSMINEVPTVYEVVTGNAEKQTKEMPSSANQNGNRSKSNSKMRGLESKSSKTIHAKDEEEGLELEEGEEEEDEDEDEHGETLCGACGDNYASDEFWICCDMCEKWFHGECVKITPARAEHIKHYKCPTCSNKRARP.

N-acetylmethionine is present on M1. The segment at 142 to 203 (AEKQTKEMPS…EEDEDEDEHG (62 aa)) is disordered. Residues 148–165 (EMPSSANQNGNRSKSNSK) show a composition bias toward polar residues. Positions 167–181 (RGLESKSSKTIHAKD) are enriched in basic and acidic residues. Acidic residues predominate over residues 182–202 (EEEGLELEEGEEEEDEDEDEH). A PHD-type zinc finger spans residues 204-256 (ETLCGACGDNYASDEFWICCDMCEKWFHGECVKITPARAEHIKHYKCPTCSNK).

This sequence belongs to the Alfin family. As to quaternary structure, interacts with H3K4me3 and to a lesser extent with H3K4me2. As to expression, ubiquitously expressed.

Its subcellular location is the nucleus. In terms of biological role, histone-binding component that specifically recognizes H3 tails trimethylated on 'Lys-4' (H3K4me3), which mark transcription start sites of virtually all active genes. This chain is PHD finger protein ALFIN-LIKE 5 (AL5), found in Arabidopsis thaliana (Mouse-ear cress).